The sequence spans 469 residues: Aspartyl/glutamyl-tRNA(Asn/Gln) amidotransferase subunit B (469 aa).

The protein belongs to the GatB/GatE family. GatB subfamily. Heterotrimer of A, B and C subunits.

It carries out the reaction L-glutamyl-tRNA(Gln) + L-glutamine + ATP + H2O = L-glutaminyl-tRNA(Gln) + L-glutamate + ADP + phosphate + H(+). The enzyme catalyses L-aspartyl-tRNA(Asn) + L-glutamine + ATP + H2O = L-asparaginyl-tRNA(Asn) + L-glutamate + ADP + phosphate + 2 H(+). Functionally, allows the formation of correctly charged Asn-tRNA(Asn) or Gln-tRNA(Gln) through the transamidation of misacylated Asp-tRNA(Asn) or Glu-tRNA(Gln) in organisms which lack either or both of asparaginyl-tRNA or glutaminyl-tRNA synthetases. The reaction takes place in the presence of glutamine and ATP through an activated phospho-Asp-tRNA(Asn) or phospho-Glu-tRNA(Gln). In Methanococcus vannielii (strain ATCC 35089 / DSM 1224 / JCM 13029 / OCM 148 / SB), this protein is Aspartyl/glutamyl-tRNA(Asn/Gln) amidotransferase subunit B.